Here is a 249-residue protein sequence, read N- to C-terminus: 5'-nucleotidase SurE (249 aa).

A divalent metal cation is bound by residues D8, D9, S39, and N91.

This sequence belongs to the SurE nucleotidase family. Requires a divalent metal cation as cofactor.

It localises to the cytoplasm. The catalysed reaction is a ribonucleoside 5'-phosphate + H2O = a ribonucleoside + phosphate. Its function is as follows. Nucleotidase that shows phosphatase activity on nucleoside 5'-monophosphates. This Pseudomonas savastanoi pv. phaseolicola (strain 1448A / Race 6) (Pseudomonas syringae pv. phaseolicola (strain 1448A / Race 6)) protein is 5'-nucleotidase SurE.